We begin with the raw amino-acid sequence, 130 residues long: Small ribosomal subunit protein uS8 (130 aa).

The protein belongs to the universal ribosomal protein uS8 family.

The protein localises to the cytoplasm. The chain is Small ribosomal subunit protein uS8 (RPS15A) from Brassica napus (Rape).